The primary structure comprises 123 residues: Alpha-ketoglutarate dehydrogenase subunit 4, mitochondrial (123 aa).

The transit peptide at 1 to 8 (MIATPIRL) directs the protein to the mitochondrion.

The protein belongs to the alpha-ketoglutarate dehydrogenase component 4 family. Component of the 2-oxoglutarate dehydrogenase complex (OGDC), also called alpha-ketoglutarate dehydrogenase (KGDH) complex. The copmplex is composed of the catalytic subunits OGDH (2-oxoglutarate dehydrogenase KGD1; also called E1 subunit), DLST (dihydrolipoamide succinyltransferase KGD2; also called E2 subunit) and DLD (dihydrolipoamide dehydrogenase LPD1; also called E3 subunit), and the assembly factor KGD4. Within OGDC, interacts (via N-terminus) with E3 subunit and (via C-terminus) with the complex core formed by E1 and E2 subunits.

It is found in the mitochondrion. Its function is as follows. Molecular adapter that is necessary to a form a stable 2-oxoglutarate dehydrogenase enzyme complex (OGDC). Required for incorporation of the E3 subunit (LPD1) into the E1-E2 core (KGD1-KGD2) of mitochondrial OGDC, and acting as a stability factor for the fully assembled complex. The polypeptide is Alpha-ketoglutarate dehydrogenase subunit 4, mitochondrial (Saccharomyces cerevisiae (strain ATCC 204508 / S288c) (Baker's yeast)).